The following is a 142-amino-acid chain: Putative pre-16S rRNA nuclease (142 aa).

Belongs to the YqgF nuclease family.

The protein localises to the cytoplasm. Functionally, could be a nuclease involved in processing of the 5'-end of pre-16S rRNA. This is Putative pre-16S rRNA nuclease from Lawsonia intracellularis (strain PHE/MN1-00).